Reading from the N-terminus, the 276-residue chain is CASP-like protein 4A3 (276 aa).

A compositionally biased stretch (polar residues) spans 1–13 (MPSMSPSSISTEK). The disordered stretch occupies residues 1–76 (MPSMSPSSIS…PVKIEETPSP (76 aa)). Residues 1-126 (MPSMSPSSIS…RRSRREEIVK (126 aa)) lie on the Cytoplasmic side of the membrane. The span at 43–72 (SLDHSSDSEKEDEKRRPESRRNKNPVKIEE) shows a compositional bias: basic and acidic residues. The helical transmembrane segment at 127-147 (FVALGFRLSEVVLALISFSIM) threads the bilayer. The Extracellular segment spans residues 148 to 167 (AADKTKGWSGDSFDRYKEYR). Residues 168–188 (FCLSVNVVAFIYASFQACDLA) form a helical membrane-spanning segment. At 189–205 (YHLVKEKHLISHHLRPL) the chain is on the cytoplasmic side. Residues 206–226 (FEFIIDQVLAYLLMCASTAAV) traverse the membrane as a helical segment. Over 227–244 (TRVDDWVSNWGKDDFTEM) the chain is Extracellular. Residues 245–265 (ASASIAMSFLTFLAFAFSSLI) form a helical membrane-spanning segment. At 266-276 (SGYNLFNQDSL) the chain is on the cytoplasmic side.

It belongs to the Casparian strip membrane proteins (CASP) family. Homodimer and heterodimers.

It localises to the cell membrane. This is CASP-like protein 4A3 from Arabidopsis lyrata subsp. lyrata (Lyre-leaved rock-cress).